Here is a 240-residue protein sequence, read N- to C-terminus: MNAEKSPVNHNVDHEEIAKFEAVASRWWDLEGEFKPLHRINPLRLGYIAERAGGLFGKKVLDVGCGGGILAESMAREGATVTGLDMGFEPLQVAKLHALESGIQVDYVQETVEEHAAKHAGQYDVVTCMEMLEHVPDPQSVVRACAQLVKPGGDVFFSTLNRNGKSWLMAVVGAEYILRMVPKGTHDVKKFIKPAELLGWVDQTSLKERHITGLHYNPITNTFKLGPGVDVNYMLHTQNK.

4 residues coordinate S-adenosyl-L-methionine: Arg44, Gly64, Asp85, and Met129.

This sequence belongs to the methyltransferase superfamily. UbiG/COQ3 family.

The enzyme catalyses a 3-demethylubiquinol + S-adenosyl-L-methionine = a ubiquinol + S-adenosyl-L-homocysteine + H(+). The catalysed reaction is a 3-(all-trans-polyprenyl)benzene-1,2-diol + S-adenosyl-L-methionine = a 2-methoxy-6-(all-trans-polyprenyl)phenol + S-adenosyl-L-homocysteine + H(+). The protein operates within cofactor biosynthesis; ubiquinone biosynthesis. Its function is as follows. O-methyltransferase that catalyzes the 2 O-methylation steps in the ubiquinone biosynthetic pathway. This Escherichia coli (strain K12 / MC4100 / BW2952) protein is Ubiquinone biosynthesis O-methyltransferase.